A 686-amino-acid polypeptide reads, in one-letter code: CAI-1 autoinducer sensor kinase/phosphatase CqsS (686 aa).

A run of 6 helical transmembrane segments spans residues 21–41, 47–64, 77–97, 100–120, 124–144, and 152–172; these read LVGWMGMLGFPAYYFIWEYWF, NLGLRCAAAVLFGGLVFR, GYFLFTIGFCLPFFFAFMMLM, WSTIWAMSFMASIFLHILLVH, VMALQALFSVLVAYLAVYGLT, and IEWQYIPIFLFTYVFGNLCFF. In terms of domain architecture, Histidine kinase spans 191-416; that stretch reads GIAHEMRNPL…EFVLSFPRYD (226 aa). Residue His194 is modified to Phosphohistidine; by autocatalysis. The Response regulatory domain maps to 569–686; that stretch reads RILVVDDNQS…VLLNKVAAWV (118 aa). A 4-aspartylphosphate modification is found at Asp618.

The protein resides in the cell membrane. The catalysed reaction is ATP + protein L-histidine = ADP + protein N-phospho-L-histidine.. Functionally, senses the quorum-sensing autoinducer CAI-1 ((S)-3-hydroxytridecan-4-one) which probably functions as an intragenus signal. The sensory signal is then relayed to LuxU and LuxO. This chain is CAI-1 autoinducer sensor kinase/phosphatase CqsS (cqsS), found in Vibrio cholerae serotype O1 (strain ATCC 39315 / El Tor Inaba N16961).